A 262-amino-acid chain; its full sequence is Thiazole synthase (262 aa).

The active-site Schiff-base intermediate with DXP is Lys-96. Residues Gly-157, 184–185 (AG), and 206–207 (NT) each bind 1-deoxy-D-xylulose 5-phosphate.

Belongs to the ThiG family. Homotetramer. Forms heterodimers with either ThiH or ThiS.

It localises to the cytoplasm. The enzyme catalyses [ThiS sulfur-carrier protein]-C-terminal-Gly-aminoethanethioate + 2-iminoacetate + 1-deoxy-D-xylulose 5-phosphate = [ThiS sulfur-carrier protein]-C-terminal Gly-Gly + 2-[(2R,5Z)-2-carboxy-4-methylthiazol-5(2H)-ylidene]ethyl phosphate + 2 H2O + H(+). It functions in the pathway cofactor biosynthesis; thiamine diphosphate biosynthesis. Catalyzes the rearrangement of 1-deoxy-D-xylulose 5-phosphate (DXP) to produce the thiazole phosphate moiety of thiamine. Sulfur is provided by the thiocarboxylate moiety of the carrier protein ThiS. In vitro, sulfur can be provided by H(2)S. In Legionella pneumophila (strain Corby), this protein is Thiazole synthase.